The chain runs to 122 residues: Large ribosomal subunit protein bL12 (122 aa).

This sequence belongs to the bacterial ribosomal protein bL12 family. In terms of assembly, homodimer. Part of the ribosomal stalk of the 50S ribosomal subunit. Forms a multimeric L10(L12)X complex, where L10 forms an elongated spine to which 2 to 4 L12 dimers bind in a sequential fashion. Binds GTP-bound translation factors.

Functionally, forms part of the ribosomal stalk which helps the ribosome interact with GTP-bound translation factors. Is thus essential for accurate translation. In Buchnera aphidicola subsp. Cinara cedri (strain Cc), this protein is Large ribosomal subunit protein bL12.